Reading from the N-terminus, the 267-residue chain is MKKHTDQPIADVQGSPDTRHIAIDRVGIKAIRHPVLVADKDGGSQHTVAQFNMYVNLPHNFKGTHMSRFVEILNSHEREISVESFEEILRSMVSRLESDSGHIEMTFPYFVNKSAPISGVKSLLDYEVTFIGEIKHGDQYGFTMKVIVPVTSLCPCSKKISDYGAHNQRSHVTISVHTNSFVWIEDVIRIAEEQASCELFGLLKRPDEKYVTEKAYNNPKFVEDIVRDVAEILNHDDRIDAYVVESENFESIHNHSAYALIERDKRK.

It belongs to the GTP cyclohydrolase IV family.

It carries out the reaction GTP + H2O = 7,8-dihydroneopterin 3'-triphosphate + formate + H(+). Its pathway is cofactor biosynthesis; 7,8-dihydroneopterin triphosphate biosynthesis; 7,8-dihydroneopterin triphosphate from GTP: step 1/1. Converts GTP to 7,8-dihydroneopterin triphosphate. The chain is GTP cyclohydrolase FolE2 from Nitrosomonas eutropha (strain DSM 101675 / C91 / Nm57).